Consider the following 61-residue polypeptide: UPF0337 protein LMOf2365_2190 (61 aa).

The disordered stretch occupies residues 1–61 (MSEDKGMKDK…TGDAKKKLSE (61 aa)).

It belongs to the UPF0337 (CsbD) family.

The protein is UPF0337 protein LMOf2365_2190 of Listeria monocytogenes serotype 4b (strain F2365).